A 508-amino-acid chain; its full sequence is Photosystem II CP47 reaction center protein (508 aa).

6 helical membrane-spanning segments follow: residues 21-36, 101-115, 140-156, 203-218, 237-252, and 457-472; these read SVHI…WAGS, IVFS…IWHW, GIHL…SGAF, IAAG…FHLS, VLSS…AFIV, and TFAL…HGAR.

The protein belongs to the PsbB/PsbC family. PsbB subfamily. As to quaternary structure, PSII is composed of 1 copy each of membrane proteins PsbA, PsbB, PsbC, PsbD, PsbE, PsbF, PsbH, PsbI, PsbJ, PsbK, PsbL, PsbM, PsbT, PsbX, PsbY, PsbZ, Psb30/Ycf12, at least 3 peripheral proteins of the oxygen-evolving complex and a large number of cofactors. It forms dimeric complexes. It depends on Binds multiple chlorophylls. PSII binds additional chlorophylls, carotenoids and specific lipids. as a cofactor.

The protein resides in the plastid. Its subcellular location is the chloroplast thylakoid membrane. Functionally, one of the components of the core complex of photosystem II (PSII). It binds chlorophyll and helps catalyze the primary light-induced photochemical processes of PSII. PSII is a light-driven water:plastoquinone oxidoreductase, using light energy to abstract electrons from H(2)O, generating O(2) and a proton gradient subsequently used for ATP formation. The polypeptide is Photosystem II CP47 reaction center protein (Cycas taitungensis (Prince sago)).